A 228-amino-acid chain; its full sequence is Cytochrome c oxidase subunit 2 (228 aa).

At 1–14 the chain is on the mitochondrial intermembrane side; the sequence is MAYPFQLGFQDATS. The chain crosses the membrane as a helical span at residues 15–45; the sequence is PIMEELLHFHDHTLMIVFLISSLVLYIISLM. The Mitochondrial matrix segment spans residues 46–59; the sequence is LTTKLTHTSTMDAQ. Residues 60–87 traverse the membrane as a helical segment; that stretch reads EVETIWTILPAIILILIALPSLRILYMM. Residues 88 to 228 are Mitochondrial intermembrane-facing; it reads DEINNPALTV…FEKWSTSMLT (141 aa). Positions 161, 196, 198, 200, 204, and 207 each coordinate Cu cation. Residue glutamate 198 participates in Mg(2+) binding. The residue at position 218 (tyrosine 218) is a Phosphotyrosine.

Belongs to the cytochrome c oxidase subunit 2 family. Component of the cytochrome c oxidase (complex IV, CIV), a multisubunit enzyme composed of 14 subunits. The complex is composed of a catalytic core of 3 subunits MT-CO1, MT-CO2 and MT-CO3, encoded in the mitochondrial DNA, and 11 supernumerary subunits COX4I, COX5A, COX5B, COX6A, COX6B, COX6C, COX7A, COX7B, COX7C, COX8 and NDUFA4, which are encoded in the nuclear genome. The complex exists as a monomer or a dimer and forms supercomplexes (SCs) in the inner mitochondrial membrane with NADH-ubiquinone oxidoreductase (complex I, CI) and ubiquinol-cytochrome c oxidoreductase (cytochrome b-c1 complex, complex III, CIII), resulting in different assemblies (supercomplex SCI(1)III(2)IV(1) and megacomplex MCI(2)III(2)IV(2)). Found in a complex with TMEM177, COA6, COX18, COX20, SCO1 and SCO2. Interacts with TMEM177 in a COX20-dependent manner. Interacts with COX20. Interacts with COX16. Requires Cu cation as cofactor.

It is found in the mitochondrion inner membrane. It carries out the reaction 4 Fe(II)-[cytochrome c] + O2 + 8 H(+)(in) = 4 Fe(III)-[cytochrome c] + 2 H2O + 4 H(+)(out). Its function is as follows. Component of the cytochrome c oxidase, the last enzyme in the mitochondrial electron transport chain which drives oxidative phosphorylation. The respiratory chain contains 3 multisubunit complexes succinate dehydrogenase (complex II, CII), ubiquinol-cytochrome c oxidoreductase (cytochrome b-c1 complex, complex III, CIII) and cytochrome c oxidase (complex IV, CIV), that cooperate to transfer electrons derived from NADH and succinate to molecular oxygen, creating an electrochemical gradient over the inner membrane that drives transmembrane transport and the ATP synthase. Cytochrome c oxidase is the component of the respiratory chain that catalyzes the reduction of oxygen to water. Electrons originating from reduced cytochrome c in the intermembrane space (IMS) are transferred via the dinuclear copper A center (CU(A)) of subunit 2 and heme A of subunit 1 to the active site in subunit 1, a binuclear center (BNC) formed by heme A3 and copper B (CU(B)). The BNC reduces molecular oxygen to 2 water molecules using 4 electrons from cytochrome c in the IMS and 4 protons from the mitochondrial matrix. The polypeptide is Cytochrome c oxidase subunit 2 (MT-CO2) (Sus scrofa (Pig)).